Reading from the N-terminus, the 144-residue chain is 3-dehydroquinate dehydratase (144 aa).

The active-site Proton acceptor is tyrosine 24. Residues asparagine 76, histidine 82, and aspartate 89 each contribute to the substrate site. Histidine 102 serves as the catalytic Proton donor. Substrate-binding positions include 103–104 (LS) and arginine 113.

The protein belongs to the type-II 3-dehydroquinase family. Homododecamer.

It carries out the reaction 3-dehydroquinate = 3-dehydroshikimate + H2O. The protein operates within metabolic intermediate biosynthesis; chorismate biosynthesis; chorismate from D-erythrose 4-phosphate and phosphoenolpyruvate: step 3/7. Its function is as follows. Catalyzes a trans-dehydration via an enolate intermediate. This Nitrosomonas europaea (strain ATCC 19718 / CIP 103999 / KCTC 2705 / NBRC 14298) protein is 3-dehydroquinate dehydratase.